Here is a 266-residue protein sequence, read N- to C-terminus: Receptor-like protein 5 (266 aa).

An N-terminal signal peptide occupies residues 1-19 (MINYRHIVFCLCVMVVVDS). At 20-169 (RLTPYLAAIE…PTRNKNKPTV (150 aa)) the chain is on the extracellular side. 2 LRR repeats span residues 93-117 (LTSL…ITKL) and 119-143 (NLTI…IVIL). Asparagine 119 is a glycosylation site (N-linked (GlcNAc...) asparagine). Residues 170–190 (LVLLLGILVGLVVAGGASFGF) traverse the membrane as a helical segment. Topologically, residues 191-266 (YLYRIRKQPK…TNQNPHLPYM (76 aa)) are cytoplasmic.

This sequence belongs to the RLP family.

It localises to the cell membrane. The sequence is that of Receptor-like protein 5 from Arabidopsis thaliana (Mouse-ear cress).